Consider the following 271-residue polypeptide: Ribosomal RNA small subunit methyltransferase A (271 aa).

S-adenosyl-L-methionine contacts are provided by N28, L30, G54, E75, D99, and N117.

Belongs to the class I-like SAM-binding methyltransferase superfamily. rRNA adenine N(6)-methyltransferase family. RsmA subfamily.

The protein localises to the cytoplasm. The catalysed reaction is adenosine(1518)/adenosine(1519) in 16S rRNA + 4 S-adenosyl-L-methionine = N(6)-dimethyladenosine(1518)/N(6)-dimethyladenosine(1519) in 16S rRNA + 4 S-adenosyl-L-homocysteine + 4 H(+). Its function is as follows. Specifically dimethylates two adjacent adenosines (A1518 and A1519) in the loop of a conserved hairpin near the 3'-end of 16S rRNA in the 30S particle. May play a critical role in biogenesis of 30S subunits. The protein is Ribosomal RNA small subunit methyltransferase A of Thermus thermophilus (strain ATCC 27634 / DSM 579 / HB8).